A 367-amino-acid polypeptide reads, in one-letter code: Glutamate 5-kinase (367 aa).

Lys-10 serves as a coordination point for ATP. Substrate-binding residues include Ser-50, Asp-137, and Asn-149. ATP contacts are provided by residues 169 to 170 and 211 to 217; these read TD and TGGMSTK. Residues 275–353 enclose the PUA domain; sequence AGEITVDEGA…QEIDAILGYE (79 aa).

Belongs to the glutamate 5-kinase family.

Its subcellular location is the cytoplasm. The catalysed reaction is L-glutamate + ATP = L-glutamyl 5-phosphate + ADP. Its pathway is amino-acid biosynthesis; L-proline biosynthesis; L-glutamate 5-semialdehyde from L-glutamate: step 1/2. Its function is as follows. Catalyzes the transfer of a phosphate group to glutamate to form L-glutamate 5-phosphate. The protein is Glutamate 5-kinase of Escherichia coli O81 (strain ED1a).